Here is a 158-residue protein sequence, read N- to C-terminus: UPF0262 protein R00612 (158 aa).

It belongs to the UPF0262 family.

The sequence is that of UPF0262 protein R00612 from Rhizobium meliloti (strain 1021) (Ensifer meliloti).